A 403-amino-acid chain; its full sequence is Probable eukaryotic initiation factor 4A (403 aa).

Residues M1–D29 form a disordered region. The Q motif motif lies at P26 to Q54. A Helicase ATP-binding domain is found at I57–I230. Residue A70 to T77 participates in ATP binding. The short motif at D178–D181 is the DEAD box element. Residues G241 to L401 form the Helicase C-terminal domain.

The protein belongs to the DEAD box helicase family. eIF4A subfamily. EIF4F is a multi-subunit complex, the composition of which varies with external and internal environmental conditions. It is composed of at least EIF4A, EIF4E and EIF4G.

It catalyses the reaction ATP + H2O = ADP + phosphate + H(+). Functionally, ATP-dependent RNA helicase which is a subunit of the eIF4F complex involved in cap recognition and is required for mRNA binding to ribosome. In the current model of translation initiation, eIF4A unwinds RNA secondary structures in the 5'-UTR of mRNAs which is necessary to allow efficient binding of the small ribosomal subunit, and subsequent scanning for the initiator codon. The protein is Probable eukaryotic initiation factor 4A of Leishmania braziliensis.